Consider the following 199-residue polypeptide: Shikimate kinase (199 aa).

14 to 19 provides a ligand contact to ATP; the sequence is GSGKST. Serine 18 contributes to the Mg(2+) binding site. Substrate is bound by residues aspartate 36, arginine 60, and glycine 82. Arginine 120 lines the ATP pocket. Arginine 147 serves as a coordination point for substrate. The tract at residues 179-199 is disordered; that stretch reads YVRRAEKNQNSHSQTKKQSRK.

Belongs to the shikimate kinase family. Monomer. Requires Mg(2+) as cofactor.

Its subcellular location is the cytoplasm. It carries out the reaction shikimate + ATP = 3-phosphoshikimate + ADP + H(+). The protein operates within metabolic intermediate biosynthesis; chorismate biosynthesis; chorismate from D-erythrose 4-phosphate and phosphoenolpyruvate: step 5/7. Its function is as follows. Catalyzes the specific phosphorylation of the 3-hydroxyl group of shikimic acid using ATP as a cosubstrate. This is Shikimate kinase from Chlorobium phaeobacteroides (strain BS1).